The primary structure comprises 50 residues: Thrombin-like enzyme BpirSP27 (50 aa).

The 50-residue stretch at 1-50 (VVGGDECNINEHRSLVAIFNSTGFFCSGILLNQEWVLTASHCDSTNFQMK) folds into the Peptidase S1 domain. Residue asparagine 20 is glycosylated (N-linked (GlcNAc...) asparagine). A disulfide bridge links cysteine 26 with cysteine 42. Histidine 41 acts as the Charge relay system in catalysis.

This sequence belongs to the peptidase S1 family. Snake venom subfamily. As to quaternary structure, monomer. In terms of processing, N-glycosylated. In terms of tissue distribution, expressed by the venom gland.

Its subcellular location is the secreted. Inhibited by serine protease inhibitors PMSF, benzamidine, leupeptin and aprotinin, as well as by copper (Cu2+) and manganese (Mn2+) ions. Not inhibited by metalloprotease inhibitors EDTA, EGTA and 1,10-phenanthroline, as well as by barium (Ba2+) and calcium ion (Ca2+). In terms of biological role, snake venom serine protease that interferes with the hemostatic system of the prey. It preferentially degrades the Bbeta chain (FGB) of fibrinogen, with minor effects on the Aalpha chain (FGA). It presents a lower ability to degrade fibrin clots than BpirSP41. It hydrolyzes chromogenic substrates S-2238 (used for testing thrombin activity), S-2222 (factor Xa), S-2266 (glandular kallikrein and factor XIa), S-2302 (plasma kallikrein, factor XIa and XIIa), and S-2251 (plasmin). It shows a decrease in the clotting time of human plasma in the presence of increasing doses of the enzyme. Its minimum coagulant dose (MCD) is 3.5 ug. It also promotes platelet aggregation in a concentration-dependent manner in the presence or absence of calcium. It also shows 20% inhibition of the hemolytic activity promoted by the complement pathways and possess only a minor role in the induction of edema and pain in rat. The sequence is that of Thrombin-like enzyme BpirSP27 from Bothrops pirajai (Piraja's lancehead).